A 207-amino-acid polypeptide reads, in one-letter code: Sodium/potassium-transporting ATPase subunit beta-1-interacting protein 1 (207 aa).

The next 3 helical transmembrane spans lie at 2 to 22 (GRCS…AAAL), 35 to 55 (APIL…LGTL), and 62 to 82 (LILY…IICF). The N-linked (GlcNAc...) asparagine glycan is linked to Asn-100. The helical transmembrane segment at 147-167 (ALSSALQIFLALFGFVYACYV) threads the bilayer.

The protein belongs to the NKAIN family. Interacts with atp1b1 C-terminus.

The protein resides in the cell membrane. This Xenopus tropicalis (Western clawed frog) protein is Sodium/potassium-transporting ATPase subunit beta-1-interacting protein 1 (nkain1).